The chain runs to 864 residues: Leucine--tRNA ligase (864 aa).

The short motif at 42–52 (PYPSGKLHMGH) is the 'HIGH' region element. Residues 624-628 (KMSKS) carry the 'KMSKS' region motif. Lys627 serves as a coordination point for ATP.

Belongs to the class-I aminoacyl-tRNA synthetase family.

It is found in the cytoplasm. It carries out the reaction tRNA(Leu) + L-leucine + ATP = L-leucyl-tRNA(Leu) + AMP + diphosphate. This is Leucine--tRNA ligase from Burkholderia pseudomallei (strain 1106a).